The chain runs to 352 residues: MRKIIHVDMDCFYAAIEMRDNPRLRDIPLAIGGSADRRGVISTANYPARRYGVRSAMATATALRLCPHLTLLPGRMEVYKSTSRQIREIFSRYTSLIEPLSLDEAYLDVTDSPHCNGSATRIAEEIRRTIADELNLTASAGIAPIKFLAKVASELNKPNGQYVITPEQVDDFLLALPLEKIPGVGKVTAKRLEERGLHTCADVRVYALADLLKAFGKFGRVLWERCQGIDDRQISPDRQRKSVGVEKTLAQDIHNWDQCENLIEQLYQELEVRLKRVKPDLHIARQGVKLKFDDFQQTTQEHVWPMLNKQDLLKLAQQTWQERRKSRGVRLVGLHVTLLDPQIERQLVFDWG.

In terms of domain architecture, UmuC spans 4-185 (IIHVDMDCFY…LPLEKIPGVG (182 aa)). Residues Asp8 and Asp103 each coordinate Mg(2+). Residue Glu104 is part of the active site.

This sequence belongs to the DNA polymerase type-Y family. In terms of assembly, monomer. It depends on Mg(2+) as a cofactor.

It localises to the cytoplasm. The catalysed reaction is DNA(n) + a 2'-deoxyribonucleoside 5'-triphosphate = DNA(n+1) + diphosphate. Functionally, poorly processive, error-prone DNA polymerase involved in untargeted mutagenesis. Copies undamaged DNA at stalled replication forks, which arise in vivo from mismatched or misaligned primer ends. These misaligned primers can be extended by PolIV. Exhibits no 3'-5' exonuclease (proofreading) activity. May be involved in translesional synthesis, in conjunction with the beta clamp from PolIII. The polypeptide is DNA polymerase IV (Pectobacterium atrosepticum (strain SCRI 1043 / ATCC BAA-672) (Erwinia carotovora subsp. atroseptica)).